Reading from the N-terminus, the 185-residue chain is MISVNDFRTGLTIVVDGQLYRVLDFQHVKPGKGAAFVRSKLRNLRNGSVNDKTFRAGEKVEKAQIDNRKMQYLYAQGDEHVFMDLESYEQTELASSAIEYELKFLKENMEVHIQSYQGEMLGVELPNTVQLEVTETEPGIKGDTASGGTKPATLETGLIVQVPFFVNQGDVLIINTEEGSYVSRA.

It belongs to the elongation factor P family.

Its subcellular location is the cytoplasm. The protein operates within protein biosynthesis; polypeptide chain elongation. Involved in peptide bond synthesis. Stimulates efficient translation and peptide-bond synthesis on native or reconstituted 70S ribosomes in vitro. Probably functions indirectly by altering the affinity of the ribosome for aminoacyl-tRNA, thus increasing their reactivity as acceptors for peptidyl transferase. The sequence is that of Elongation factor P from Lysinibacillus sphaericus (strain C3-41).